The primary structure comprises 371 residues: 4-hydroxy-3-methylbut-2-en-1-yl diphosphate synthase (flavodoxin) (371 aa).

Residues Cys-270, Cys-273, Cys-305, and Glu-312 each coordinate [4Fe-4S] cluster.

The protein belongs to the IspG family. [4Fe-4S] cluster is required as a cofactor.

It catalyses the reaction (2E)-4-hydroxy-3-methylbut-2-enyl diphosphate + oxidized [flavodoxin] + H2O + 2 H(+) = 2-C-methyl-D-erythritol 2,4-cyclic diphosphate + reduced [flavodoxin]. It functions in the pathway isoprenoid biosynthesis; isopentenyl diphosphate biosynthesis via DXP pathway; isopentenyl diphosphate from 1-deoxy-D-xylulose 5-phosphate: step 5/6. In terms of biological role, converts 2C-methyl-D-erythritol 2,4-cyclodiphosphate (ME-2,4cPP) into 1-hydroxy-2-methyl-2-(E)-butenyl 4-diphosphate. This Shewanella woodyi (strain ATCC 51908 / MS32) protein is 4-hydroxy-3-methylbut-2-en-1-yl diphosphate synthase (flavodoxin).